Here is a 136-residue protein sequence, read N- to C-terminus: MLQPKKTKYDKRHKGRIKGNATRGTKLCFGKYGLKSLDPGWITDRQIESARVAATRYMKRQGQLWLNIFPDKPVTKKPQEVRMGKGKGVRDHWVSVVKPGRVLIEVDGVDLLMGKEALRLASQKLPVRTKFIIKNA.

This sequence belongs to the universal ribosomal protein uL16 family. As to quaternary structure, part of the 50S ribosomal subunit.

Binds 23S rRNA and is also seen to make contacts with the A and possibly P site tRNAs. The sequence is that of Large ribosomal subunit protein uL16 from Karelsulcia muelleri (strain GWSS) (Sulcia muelleri).